A 490-amino-acid chain; its full sequence is MERKEIESLFTRAREIRALVIGDLMLDEYLWGKAERISPEAPVQVVDVTREDLRLGGAGNVVNNLVALGCQVAVCSVIGGDENGSHLRHAFTGKGVDLTGVFEDPLRLTSKKTRVIAANQQIVRIDRESRDEISLEFEEKVLDFIAAEAARFNVILVSDYLKGVLTPRVLEAVCAAGRRLGIPVVVDPKGSDYGKYRGATILTPNRKEAETASRMSIRTEEGLTRAAETLLAGLELDALLITRSEEGMSLFMQDGRTVHIPTVAREVYDVTGAGDTVLSVLSVGLACGLEFGEAARVANVAAGIAVGKLGTSTVSPGEIIAEIGHAHPDSDAKIKNLDALAAIVKAEKTRGKRLVFTNGCFDLLHVGHVKYLQKARTFGDLLVVGLNSDASVRRLKGAERPLIGEAERAHILAALDCVDFVVIFDEDTPLRLIETLQPQVLVKGGDYTPERVVGKEVVESYGGRVELVTFVDGKSTTNIIEKIRTGSIKE.

The tract at residues 1–330 is ribokinase; sequence MERKEIESLF…AEIGHAHPDS (330 aa). Position 205–208 (205–208) interacts with ATP; sequence NRKE. The active site involves D275. A cytidylyltransferase region spans residues 356–490; sequence FTNGCFDLLH…EKIRTGSIKE (135 aa).

It in the N-terminal section; belongs to the carbohydrate kinase PfkB family. This sequence in the C-terminal section; belongs to the cytidylyltransferase family. As to quaternary structure, homodimer.

The catalysed reaction is D-glycero-beta-D-manno-heptose 7-phosphate + ATP = D-glycero-beta-D-manno-heptose 1,7-bisphosphate + ADP + H(+). It carries out the reaction D-glycero-beta-D-manno-heptose 1-phosphate + ATP + H(+) = ADP-D-glycero-beta-D-manno-heptose + diphosphate. It participates in nucleotide-sugar biosynthesis; ADP-L-glycero-beta-D-manno-heptose biosynthesis; ADP-L-glycero-beta-D-manno-heptose from D-glycero-beta-D-manno-heptose 7-phosphate: step 1/4. Its pathway is nucleotide-sugar biosynthesis; ADP-L-glycero-beta-D-manno-heptose biosynthesis; ADP-L-glycero-beta-D-manno-heptose from D-glycero-beta-D-manno-heptose 7-phosphate: step 3/4. Functionally, catalyzes the phosphorylation of D-glycero-D-manno-heptose 7-phosphate at the C-1 position to selectively form D-glycero-beta-D-manno-heptose-1,7-bisphosphate. Catalyzes the ADP transfer from ATP to D-glycero-beta-D-manno-heptose 1-phosphate, yielding ADP-D-glycero-beta-D-manno-heptose. The sequence is that of Bifunctional protein HldE from Geotalea uraniireducens (strain Rf4) (Geobacter uraniireducens).